Here is a 297-residue protein sequence, read N- to C-terminus: Coiled-coil domain-containing protein 196 (297 aa).

Residues 83–117 are a coiled coil; sequence ESSVMELLKEAEEMKQNLERKNKMLRKEMEMLWNK. The segment at 122 to 161 is disordered; it reads EELSDQQKAPQTKNKADLQDGKAPKSPSSPRKTESELEKS. Basic and acidic residues-rich tracts occupy residues 135 to 144 and 152 to 161; these read NKADLQDGKA and RKTESELEKS.

In Homo sapiens (Human), this protein is Coiled-coil domain-containing protein 196.